A 457-amino-acid chain; its full sequence is MALWGGRFTQAADQRFKQFNDSLRFDYRLAEQDIVGSVAWSKALVTVGVLTAEEQAQLEEALNVLLEDVRARPQQILESDAEDIHSWVEGKLIDKVGQLGKKLHTGRSRNDQVATDLKLWCKDTVSELLTANRQLQSALVETAQNNQDAVMPGYTHLQRAQPVTFAHWCLAYVEMLARDESRLQDALKRLDVSPLGCGALAGTAYEIDREQLAGWLGFASATRNSLDSVSDRDHVLELLSAAAIGMVHLSRFAEDLIFFNTGEAGFVELSDRVTSGSSLMPQKKNPDALELIRGKCGRVQGALTGMMMTLKGLPLAYNKDMQEDKEGLFDALDTWLDCLHMAALVLDGIQVKRPRCQEAAQQGYANATELADYLVAKGVPFREAHHIVGEAVVEAIRQGKPLEDLPLSELQKFSQVIDEDVYPILSLQSCLDKRAAKGGVSPQQVAQAIAFAQARLG.

Belongs to the lyase 1 family. Argininosuccinate lyase subfamily.

The protein resides in the cytoplasm. It carries out the reaction 2-(N(omega)-L-arginino)succinate = fumarate + L-arginine. It participates in amino-acid biosynthesis; L-arginine biosynthesis; L-arginine from L-ornithine and carbamoyl phosphate: step 3/3. This chain is Argininosuccinate lyase, found in Escherichia coli O9:H4 (strain HS).